The chain runs to 328 residues: RNA binding protein fox-1 homolog 3 (328 aa).

The span at 1–30 (MAQPYPPAQYPPPPQNGIPAEYAPPPPHPT) shows a compositional bias: pro residues. Residues 1–106 (MAQPYPPAQY…QPKRLHVSNI (106 aa)) are disordered. Residues 49-87 (TPAQTHPEQPSSDTSTQPITGAQTVPQTDEAAQTDSQPL) are compositionally biased toward polar residues. In terms of domain architecture, RRM spans 99–172 (KRLHVSNIPF…NPVVGAVYGP (74 aa)). Residue arginine 192 is modified to Asymmetric dimethylarginine; alternate. Position 192 is an omega-N-methylarginine; alternate (arginine 192). Arginine 288 is modified (asymmetric dimethylarginine).

The protein resides in the nucleus. It localises to the cytoplasm. Pre-mRNA alternative splicing regulator. Regulates alternative splicing of RBFOX2 to enhance the production of mRNA species that are targeted for nonsense-mediated decay (NMD). This is RNA binding protein fox-1 homolog 3 (RBFOX3) from Bos taurus (Bovine).